The chain runs to 121 residues: UPF0102 protein XF_0554 (121 aa).

Belongs to the UPF0102 family.

This chain is UPF0102 protein XF_0554, found in Xylella fastidiosa (strain 9a5c).